Reading from the N-terminus, the 538-residue chain is Cytochrome P450 monooxygenase xanG (538 aa).

The chain crosses the membrane as a helical span at residues 44–64 (MILYYLASIPLAIICYLAWYL). N378 carries N-linked (GlcNAc...) asparagine glycosylation. Position 489 (C489) interacts with heme.

This sequence belongs to the cytochrome P450 family. Heme serves as cofactor.

Its subcellular location is the membrane. The protein operates within secondary metabolite biosynthesis. Cytochrome P450 monooxygenase; part of the gene cluster that mediates the biosynthesis of the isocyanide xanthocillin and its derivatives. The first step of the pathway consists in the conversion of tyrosine into a vinyl-isonitrile intermediate by the isocyanide synthase xanB. Subsequent oxidative dimerization of this intermediate to form xanthocillin may involve the cytochrome P450 monooxygenase xanG, whose expression is coregulated with that of XanB. Xanthocillin can be further modified by the isonitrile hydratase-like protein xanA which introduces N-formyl groups and the methyltransferase xanE which introduces methyl groups, leading to the production of several derivatives including fumiformamide. Finally, fumiformamide can be subject to both oxidative and reductive cyclization to yield melanocins E and F, respectively. This chain is Cytochrome P450 monooxygenase xanG, found in Aspergillus fumigatus (strain ATCC MYA-4609 / CBS 101355 / FGSC A1100 / Af293) (Neosartorya fumigata).